The chain runs to 96 residues: MEGFGSDFSVGGSSAGKVDTGAIMEQVKVQIAVANAQELLQRMTDKCFRKCIGKPGGSLDNSEQKCIAMCMDRYMDAWNTVSRAYNSRLQRERAKM.

Residues 47 to 70 (CFRKCIGKPGGSLDNSEQKCIAMC) carry the Twin CX3C motif motif. Disulfide bonds link cysteine 47/cysteine 70 and cysteine 51/cysteine 66.

It belongs to the small Tim family. Heterohexamer; composed of 3 copies of TIMM8 (TIMM8A or TIMM8B) and 3 copies of TIMM13, named soluble 70 kDa complex. Associates with the TIM22 complex, whose core is composed of TIMM22.

The protein resides in the mitochondrion inner membrane. Mitochondrial intermembrane chaperone that participates in the import and insertion of some multi-pass transmembrane proteins into the mitochondrial inner membrane. Also required for the transfer of beta-barrel precursors from the TOM complex to the sorting and assembly machinery (SAM complex) of the outer membrane. Acts as a chaperone-like protein that protects the hydrophobic precursors from aggregation and guide them through the mitochondrial intermembrane space. The TIMM8-TIMM13 complex mediates the import of some proteins while the predominant TIMM9-TIMM10 70 kDa complex mediates the import of much more proteins. The protein is Mitochondrial import inner membrane translocase subunit Tim13-A (timm13-a) of Xenopus laevis (African clawed frog).